Here is a 285-residue protein sequence, read N- to C-terminus: Alpha-acetolactate decarboxylase (285 aa).

Residues 1–25 (MKKNIITSITSLALVAGLSLTAFAA) form the signal peptide.

Belongs to the alpha-acetolactate decarboxylase family.

It catalyses the reaction (2S)-2-acetolactate + H(+) = (R)-acetoin + CO2. It participates in polyol metabolism; (R,R)-butane-2,3-diol biosynthesis; (R,R)-butane-2,3-diol from pyruvate: step 2/3. Functionally, converts acetolactate into acetoin, which can be excreted by the cells. This may be a mechanism for controlling the internal pH of cells in the stationary stage. The protein is Alpha-acetolactate decarboxylase (aldB) of Brevibacillus brevis (Bacillus brevis).